A 149-amino-acid chain; its full sequence is Active regulator of SIRT1 (149 aa).

Residues 1-64 (MSVSLLRKGL…GLRHDQKATA (64 aa)) are disordered. Positions 8-19 (KGLDLLREERSG) are enriched in basic and acidic residues. A compositionally biased stretch (low complexity) spans 30–41 (SSKPKPCLSSSK). Residues 43–52 (GMRKQLRRLK) are compositionally biased toward basic residues.

It belongs to the AROS family. As to quaternary structure, part of the small subunit (SSU) processome, composed of more than 70 proteins and the RNA chaperone small nucleolar RNA (snoRNA) U3.

Its subcellular location is the nucleus. It localises to the nucleolus. In terms of biological role, part of the small subunit (SSU) processome, first precursor of the small eukaryotic ribosomal subunit. During the assembly of the SSU processome in the nucleolus, many ribosome biogenesis factors, an RNA chaperone and ribosomal proteins associate with the nascent pre-rRNA and work in concert to generate RNA folding, modifications, rearrangements and cleavage as well as targeted degradation of pre-ribosomal RNA by the RNA exosome. Acts as a chaperone that specifically mediates the integration of RPS19 in state post-A1. Direct regulator of SIRT1. In Xenopus tropicalis (Western clawed frog), this protein is Active regulator of SIRT1 (rps19bp1).